The chain runs to 740 residues: MAETKANPFDMDSSSFDAEKYLERLLKDCSLKQIMDTEAAVVKDTQTLHSDMQTLVYENYNKFISATDTIRRMKDDFKQMETDVNLLMTKMQSITTFSEQITGTLQGTRSQLCRLSEKHSLLKRLQFLSTLPAKLKSLIEEQNYAQAVQDYLHAQKVFAQYGRQPSFDGIQRDCDAIMADLKEQLRSDFQRAGNTAQSLTEIGELLLQLDEKTSDLASEMLTCAGKRLHEQIVMLQDQTERDMLEFVDMGIDGFLNDLALVVTSYFDMFVAKHYEHERDDFQENALQELNVFLNQNIEKYLTLVQDRVESDIGYGDTQVMLRALDRLHRRLQAMRNICRGLEVQRNTVSIIISAAHQLCDAHAKNLKDHFADSLSAVRLSLVSAKSDAAAGLNLGDLISNLYVSMVEKIKGVLQDLLIFLRTDWSFNIKAEHKGALCVEGIRENLLIGFLRHIAKVMCGFGDASSSSPPNLLLVLSKTCLELEQQGVHILIALVDDLYEIDSENSATLTHETEICAEMRETAQSLLDAYVRLQGTNISQMLRKSVETRDWLNCLEPRSVRAVMKRVVEELGSIETVVASLYEANTNATSGFRTTASSDSSRKTYFSNFASTSKPQYRSNWSNYTPSQLESSYVSNIHRLFSERVEIFTSVEFTKASIIMGIIKIGLKTLLECVRLRTFSKFGLQQIQVDAHYLQMNLWRFVSDENLVNFLLDEILGSAVQRCLESVLMEPNAVEIICERG.

Coiled-coil stretches lie at residues 65-87 and 322-344; these read SATDTIRRMKDDFKQMETDVNLL and RALDRLHRRLQAMRNICRGLEVQ.

The protein belongs to the VPS51 family. In terms of assembly, component of the Golgi-associated retrograde protein (GARP) complex.

May act as a component of the GARP complex that is involved in retrograde transport from early and late endosomes to the trans-Golgi network (TGN). The chain is Vacuolar protein sorting-associated protein 51 homolog from Drosophila melanogaster (Fruit fly).